Here is a 319-residue protein sequence, read N- to C-terminus: RWD domain-containing protein 2B (319 aa).

Positions 41-165 (AELDLLASMF…EWVREHASGY (125 aa)) constitute an RWD domain. Position 275 is a phosphoserine (Ser275).

In terms of tissue distribution, ubiquitous.

The polypeptide is RWD domain-containing protein 2B (RWDD2B) (Homo sapiens (Human)).